The primary structure comprises 808 residues: Enhancer of polycomb homolog 2 (808 aa).

Glycyl lysine isopeptide (Lys-Gly) (interchain with G-Cter in SUMO2) cross-links involve residues Lys135, Lys195, and Lys324. The segment at 337–357 (YPKKPKAEAGIAPQQPTPETL) is disordered. Lys362 is covalently cross-linked (Glycyl lysine isopeptide (Lys-Gly) (interchain with G-Cter in SUMO2)). 3 disordered regions span residues 371–397 (QSSDEDEFPQVLSPASEAEEENDPDGS), 595–630 (QRQQLAQLHQKQQSQHSSQQTHPKAQGSSTSDCMSK), and 645–682 (VSAPVPSRSEGSKEQNTGHNNMNGVVQPSGPSKTLYST). Residues 595-614 (QRQQLAQLHQKQQSQHSSQQ) show a composition bias toward low complexity. Composition is skewed to polar residues over residues 615–630 (THPKAQGSSTSDCMSK) and 658–682 (EQNTGHNNMNGVVQPSGPSKTLYST). Phosphoserine is present on Ser755.

This sequence belongs to the enhancer of polycomb family.

Its subcellular location is the nucleus. Functionally, may play a role in transcription or DNA repair. This Mus musculus (Mouse) protein is Enhancer of polycomb homolog 2 (Epc2).